The chain runs to 338 residues: Holliday junction branch migration complex subunit RuvB (338 aa).

The segment at 1–181 (MERAITPEKR…FGVISRLEFY (181 aa)) is large ATPase domain (RuvB-L). Residues L20, R21, G62, K65, T66, T67, 128 to 130 (EDF), R171, Y181, and R218 each bind ATP. A Mg(2+)-binding site is contributed by T66. The tract at residues 182–252 (THDELAFIVT…VVQETLRLLE (71 aa)) is small ATPAse domain (RuvB-S). A head domain (RuvB-H) region spans residues 255 to 338 (EMGFDQMDRM…TPERPQGSLF (84 aa)). R310 and R315 together coordinate DNA.

Belongs to the RuvB family. Homohexamer. Forms an RuvA(8)-RuvB(12)-Holliday junction (HJ) complex. HJ DNA is sandwiched between 2 RuvA tetramers; dsDNA enters through RuvA and exits via RuvB. An RuvB hexamer assembles on each DNA strand where it exits the tetramer. Each RuvB hexamer is contacted by two RuvA subunits (via domain III) on 2 adjacent RuvB subunits; this complex drives branch migration. In the full resolvosome a probable DNA-RuvA(4)-RuvB(12)-RuvC(2) complex forms which resolves the HJ.

It localises to the cytoplasm. It catalyses the reaction ATP + H2O = ADP + phosphate + H(+). Functionally, the RuvA-RuvB-RuvC complex processes Holliday junction (HJ) DNA during genetic recombination and DNA repair, while the RuvA-RuvB complex plays an important role in the rescue of blocked DNA replication forks via replication fork reversal (RFR). RuvA specifically binds to HJ cruciform DNA, conferring on it an open structure. The RuvB hexamer acts as an ATP-dependent pump, pulling dsDNA into and through the RuvAB complex. RuvB forms 2 homohexamers on either side of HJ DNA bound by 1 or 2 RuvA tetramers; 4 subunits per hexamer contact DNA at a time. Coordinated motions by a converter formed by DNA-disengaged RuvB subunits stimulates ATP hydrolysis and nucleotide exchange. Immobilization of the converter enables RuvB to convert the ATP-contained energy into a lever motion, pulling 2 nucleotides of DNA out of the RuvA tetramer per ATP hydrolyzed, thus driving DNA branch migration. The RuvB motors rotate together with the DNA substrate, which together with the progressing nucleotide cycle form the mechanistic basis for DNA recombination by continuous HJ branch migration. Branch migration allows RuvC to scan DNA until it finds its consensus sequence, where it cleaves and resolves cruciform DNA. The protein is Holliday junction branch migration complex subunit RuvB of Trichlorobacter lovleyi (strain ATCC BAA-1151 / DSM 17278 / SZ) (Geobacter lovleyi).